Reading from the N-terminus, the 500-residue chain is Glutathione reductase (500 aa).

FAD-binding residues include S12 and G13. Glutathione is bound at residue S12. R19 is a glutathione binding site. FAD is bound by residues E32, T39, C40, and K48. A disulfide bridge links C40 with C45. Y95 contributes to the glutathione binding site. A111 contributes to the FAD binding site. Positions 187, 190, 207, 213, and 272 each coordinate NADP(+). 2 residues coordinate FAD: D312 and T354. Position 362 (R362) interacts with glutathione. V384 lines the NADP(+) pocket. H485 contacts FAD. H485 functions as the Proton acceptor in the catalytic mechanism.

The protein belongs to the class-I pyridine nucleotide-disulfide oxidoreductase family. Homodimer. FAD serves as cofactor.

The protein localises to the cytoplasm. It catalyses the reaction 2 glutathione + NADP(+) = glutathione disulfide + NADPH + H(+). In terms of biological role, catalyzes the reduction of glutathione disulfide (GSSG) to reduced glutathione (GSH). Constitutes the major mechanism to maintain a high GSH:GSSG ratio in the cytosol. The polypeptide is Glutathione reductase (Plasmodium falciparum (isolate K1 / Thailand)).